We begin with the raw amino-acid sequence, 517 residues long: Protein disulfide isomerase-like 1-2 (517 aa).

The first 23 residues, 1–23, serve as a signal peptide directing secretion; it reads MAVNLVLSFALAILISSSPTAVG. Residues 24 to 143 enclose the Thioredoxin 1 domain; it reads VDATEELKEA…IVEYLKRQVG (120 aa). N-linked (GlcNAc...) asparagine glycosylation occurs at Asn41. Catalysis depends on nucleophile residues Cys61 and Cys64. Cysteines 61 and 64 form a disulfide. An N-linked (GlcNAc...) asparagine glycan is attached at Asn301. A Thioredoxin 2 domain is found at 357-484; the sequence is VEYGNLTPYV…IISFINENRG (128 aa). Catalysis depends on nucleophile residues Cys407 and Cys410. Residues Cys407 and Cys410 are joined by a disulfide bond. Residues 514–517 carry the Prevents secretion from ER motif; that stretch reads KDEL.

Belongs to the protein disulfide isomerase family.

It localises to the endoplasmic reticulum lumen. It catalyses the reaction Catalyzes the rearrangement of -S-S- bonds in proteins.. Functionally, acts as a protein-folding catalyst that interacts with nascent polypeptides to catalyze the formation, isomerization, and reduction or oxidation of disulfide bonds. May play a role in storage protein biogenesis. This Oryza sativa subsp. japonica (Rice) protein is Protein disulfide isomerase-like 1-2 (PDIL1-2).